Consider the following 218-residue polypeptide: Small ribosomal subunit protein uS3 (218 aa).

The KH type-2 domain maps to 43–113; that stretch reads IREHIERKLA…KVQVNVREVS (71 aa).

The protein belongs to the universal ribosomal protein uS3 family. Part of the 30S ribosomal subunit. Forms a tight complex with proteins S10 and S14.

Binds the lower part of the 30S subunit head. Binds mRNA in the 70S ribosome, positioning it for translation. The chain is Small ribosomal subunit protein uS3 from Rubrobacter xylanophilus (strain DSM 9941 / JCM 11954 / NBRC 16129 / PRD-1).